The following is a 187-amino-acid chain: Basic helix-loop-helix transcription factor scleraxis (187 aa).

Disordered regions lie at residues 21–83 and 140–163; these read LSED…TNSV and AFFH…QPKQ. Residues 34–43 are compositionally biased toward basic and acidic residues; that stretch reads SDEKPFHLDA. Basic residues predominate over residues 50–72; sequence AGKRRSGKKAGRLHREPRQRHTA. The bHLH domain maps to 67 to 119; sequence RQRHTANARERDRTNSVNTAFTALRTLIPTEPADRKLSKIETLRLASSYISHL.

Efficient DNA binding requires dimerization with another bHLH protein. Dimerizes and binds the E-box consensus sequence with E12. In terms of tissue distribution, expressed in the intersomitic, the superficial proximomedial limb mesenchyme and the subectodermal mesenchyme.

It is found in the nucleus. Plays an early essential role in mesoderm formation, as well as a later role in formation of somite-derived chondrogenic lineages. The protein is Basic helix-loop-helix transcription factor scleraxis (SCX) of Gallus gallus (Chicken).